Here is a 161-residue protein sequence, read N- to C-terminus: Cytochrome c-type biogenesis protein CcmE (161 aa).

Over 1–8 (MNARRKKR) the chain is Cytoplasmic. Residues 9-29 (LTLAVALIGGVAAIASLLLYA) form a helical; Signal-anchor for type II membrane protein membrane-spanning segment. The Periplasmic portion of the chain corresponds to 30–161 (LNSNLNLFYT…DYNEQQKTSY (132 aa)). Heme is bound by residues His-131 and Tyr-135.

It belongs to the CcmE/CycJ family.

The protein resides in the cell inner membrane. Its function is as follows. Heme chaperone required for the biogenesis of c-type cytochromes. Transiently binds heme delivered by CcmC and transfers the heme to apo-cytochromes in a process facilitated by CcmF and CcmH. The sequence is that of Cytochrome c-type biogenesis protein CcmE from Shewanella sediminis (strain HAW-EB3).